The primary structure comprises 153 residues: Aspartate carbamoyltransferase regulatory chain (153 aa).

Residues Cys109, Cys114, Cys138, and Cys141 each contribute to the Zn(2+) site.

This sequence belongs to the PyrI family. Contains catalytic and regulatory chains. Zn(2+) is required as a cofactor.

In terms of biological role, involved in allosteric regulation of aspartate carbamoyltransferase. In Vibrio vulnificus (strain CMCP6), this protein is Aspartate carbamoyltransferase regulatory chain.